The sequence spans 660 residues: DNA mismatch repair protein MutL (660 aa).

Belongs to the DNA mismatch repair MutL/HexB family.

In terms of biological role, this protein is involved in the repair of mismatches in DNA. It is required for dam-dependent methyl-directed DNA mismatch repair. May act as a 'molecular matchmaker', a protein that promotes the formation of a stable complex between two or more DNA-binding proteins in an ATP-dependent manner without itself being part of a final effector complex. This Streptococcus equi subsp. equi (strain 4047) protein is DNA mismatch repair protein MutL.